Consider the following 308-residue polypeptide: Tetraacyldisaccharide 4'-kinase (308 aa).

63–70 (SFGGNGKT) is a binding site for ATP.

It belongs to the LpxK family.

It catalyses the reaction a lipid A disaccharide + ATP = a lipid IVA + ADP + H(+). It participates in glycolipid biosynthesis; lipid IV(A) biosynthesis; lipid IV(A) from (3R)-3-hydroxytetradecanoyl-[acyl-carrier-protein] and UDP-N-acetyl-alpha-D-glucosamine: step 6/6. Functionally, transfers the gamma-phosphate of ATP to the 4'-position of a tetraacyldisaccharide 1-phosphate intermediate (termed DS-1-P) to form tetraacyldisaccharide 1,4'-bis-phosphate (lipid IVA). This Campylobacter jejuni subsp. jejuni serotype O:6 (strain 81116 / NCTC 11828) protein is Tetraacyldisaccharide 4'-kinase.